The sequence spans 20 residues: Methyl-coenzyme M reductase subunit gamma (20 aa).

A disordered region spans residues 1–20 (AYERQFYPGATSVAENNIGH).

This sequence belongs to the methyl-coenzyme M reductase gamma subunit family. MCR from M.thermophila is a heterotrimer composed of an alpha, a beta, and a gamma subunit. Requires coenzyme F430 as cofactor.

Its subcellular location is the cytoplasm. The catalysed reaction is coenzyme B + methyl-coenzyme M = methane + coenzyme M-coenzyme B heterodisulfide. The protein operates within one-carbon metabolism; methyl-coenzyme M reduction; methane from methyl-coenzyme M: step 1/1. Component of the methyl-coenzyme M reductase (MCR) I that catalyzes the reductive cleavage of methyl-coenzyme M (CoM-S-CH3 or 2-(methylthio)ethanesulfonate) using coenzyme B (CoB or 7-mercaptoheptanoylthreonine phosphate) as reductant which results in the production of methane and the mixed heterodisulfide of CoB and CoM (CoM-S-S-CoB). This is the final step in methanogenesis. The polypeptide is Methyl-coenzyme M reductase subunit gamma (Methanosarcina thermophila).